A 157-amino-acid polypeptide reads, in one-letter code: 6,7-dimethyl-8-ribityllumazine synthase (157 aa).

5-amino-6-(D-ribitylamino)uracil-binding positions include F22, 56-58 (AME), and 80-82 (AVV). Position 85 to 86 (85 to 86 (ET)) interacts with (2S)-2-hydroxy-3-oxobutyl phosphate. The Proton donor role is filled by H88. Position 113 (F113) interacts with 5-amino-6-(D-ribitylamino)uracil. Residue R127 coordinates (2S)-2-hydroxy-3-oxobutyl phosphate.

This sequence belongs to the DMRL synthase family.

It carries out the reaction (2S)-2-hydroxy-3-oxobutyl phosphate + 5-amino-6-(D-ribitylamino)uracil = 6,7-dimethyl-8-(1-D-ribityl)lumazine + phosphate + 2 H2O + H(+). The protein operates within cofactor biosynthesis; riboflavin biosynthesis; riboflavin from 2-hydroxy-3-oxobutyl phosphate and 5-amino-6-(D-ribitylamino)uracil: step 1/2. In terms of biological role, catalyzes the formation of 6,7-dimethyl-8-ribityllumazine by condensation of 5-amino-6-(D-ribitylamino)uracil with 3,4-dihydroxy-2-butanone 4-phosphate. This is the penultimate step in the biosynthesis of riboflavin. This Levilactobacillus brevis (strain ATCC 367 / BCRC 12310 / CIP 105137 / JCM 1170 / LMG 11437 / NCIMB 947 / NCTC 947) (Lactobacillus brevis) protein is 6,7-dimethyl-8-ribityllumazine synthase.